We begin with the raw amino-acid sequence, 370 residues long: MTQPIIELHQVTKRYADNTILSNINLTLESGKFYTLLGPSGCGKTTILRTIAGFTDATTGDILFAGKRINDVPANKRNVNTVFQDYALFPHMTVAENVAFGLTLQKRPKSEIAERVNQALRLVQLADYGDRAISALSGGQQQRIAIARAIVMQPQVLLLDEPLSALDAKLRRQMQYELRDLQQRLGITFLFVTHDQEEALAMSDEIFVMNQGEILQSGSPVDIYDEPINHFVADFIGESNILPGKMIDDFQVAFGGHQFECADAGIPVNEPVEIVIRPEDLTLTDLAHAKLTVTINTQLFRGDYYEIAATDGLGNDWLIHSVNPAEDGDQIGLTFRPQDLHVMRFGEKEAEFDARLETYEGTEDDRFDET.

In terms of domain architecture, ABC transporter spans 6 to 236 (IELHQVTKRY…PINHFVADFI (231 aa)). Residue 38–45 (GPSGCGKT) coordinates ATP.

It belongs to the ABC transporter superfamily. Spermidine/putrescine importer (TC 3.A.1.11.1) family. As to quaternary structure, the complex is composed of two ATP-binding proteins (PotA), two transmembrane proteins (PotB and PotC) and a solute-binding protein (PotD).

Its subcellular location is the cell membrane. The catalysed reaction is ATP + H2O + polyamine-[polyamine-binding protein]Side 1 = ADP + phosphate + polyamineSide 2 + [polyamine-binding protein]Side 1.. Part of the ABC transporter complex PotABCD involved in spermidine/putrescine import. Responsible for energy coupling to the transport system. In Levilactobacillus brevis (strain ATCC 367 / BCRC 12310 / CIP 105137 / JCM 1170 / LMG 11437 / NCIMB 947 / NCTC 947) (Lactobacillus brevis), this protein is Spermidine/putrescine import ATP-binding protein PotA.